A 664-amino-acid chain; its full sequence is Transketolase 1 (664 aa).

Residue H26 coordinates substrate. Thiamine diphosphate-binding positions include H66 and 114–116; that span reads GPL. Position 155 (D155) interacts with Mg(2+). Residues G156 and N185 each coordinate thiamine diphosphate. Mg(2+) contacts are provided by N185 and I187. Residues H260, R357, and S384 each contribute to the substrate site. H260 contributes to the thiamine diphosphate binding site. E411 (proton donor) is an active-site residue. F437 provides a ligand contact to thiamine diphosphate. Substrate is bound by residues H461, D469, and R520.

It belongs to the transketolase family. Homodimer. Mg(2+) is required as a cofactor. Ca(2+) serves as cofactor. The cofactor is Mn(2+). Requires Co(2+) as cofactor. It depends on thiamine diphosphate as a cofactor.

The enzyme catalyses D-sedoheptulose 7-phosphate + D-glyceraldehyde 3-phosphate = aldehydo-D-ribose 5-phosphate + D-xylulose 5-phosphate. In terms of biological role, catalyzes the transfer of a two-carbon ketol group from a ketose donor to an aldose acceptor, via a covalent intermediate with the cofactor thiamine pyrophosphate. This chain is Transketolase 1 (tkt1), found in Vibrio vulnificus (strain YJ016).